The chain runs to 134 residues: Ribosome-binding factor A (134 aa).

The protein belongs to the RbfA family. Monomer. Binds 30S ribosomal subunits, but not 50S ribosomal subunits or 70S ribosomes.

The protein resides in the cytoplasm. In terms of biological role, one of several proteins that assist in the late maturation steps of the functional core of the 30S ribosomal subunit. Associates with free 30S ribosomal subunits (but not with 30S subunits that are part of 70S ribosomes or polysomes). Required for efficient processing of 16S rRNA. May interact with the 5'-terminal helix region of 16S rRNA. This Rhizobium leguminosarum bv. trifolii (strain WSM2304) protein is Ribosome-binding factor A.